The primary structure comprises 791 residues: Diacylglycerol kinase gamma (791 aa).

Disordered stretches follow at residues 82-103 and 117-154; these read KPRH…ANSA and DEAC…SSSS. Basic and acidic residues predominate over residues 83–92; it reads PRHETSDHPT. Positions 94 to 103 are enriched in polar residues; the sequence is GASNSEANSA. 2 EF-hand domains span residues 175–210 and 220–255; these read RPQD…MLHI and ELRP…TIPL. Ca(2+) is bound by residues D188, D190, N192, E199, D233, D235, D237, and E244. 2 consecutive Phorbol-ester/DAG-type zinc fingers follow at residues 271–321 and 336–385; these read RHAW…IPGC and QHAW…LCDG. The region spanning 430-564 is the DAGKc domain; sequence PGTHPLLVLV…LDRWHLEVIP (135 aa). Residues 768–791 are disordered; it reads APMMMGPPQKSSFFSLRRKSRSKD.

The protein belongs to the eukaryotic diacylglycerol kinase family. Predominantly expressed in retina and in a much lesser extent in the brain. Other tissues contain extremely low levels of DGK-gamma.

The protein resides in the membrane. It is found in the cytoplasm. The protein localises to the cytosol. It localises to the cytoskeleton. It carries out the reaction a 1,2-diacyl-sn-glycerol + ATP = a 1,2-diacyl-sn-glycero-3-phosphate + ADP + H(+). The enzyme catalyses 1,2-didecanoyl-sn-glycerol + ATP = 1,2-didecanoyl-sn-glycero-3-phosphate + ADP + H(+). It catalyses the reaction 1-octadecanoyl-2-(5Z,8Z,11Z,14Z-eicosatetraenoyl)-sn-glycerol + ATP = 1-octadecanoyl-2-(5Z,8Z,11Z,14Z-eicosatetraenoyl)-sn-glycero-3-phosphate + ADP + H(+). The catalysed reaction is 1,2-di-(9Z-octadecenoyl)-sn-glycerol + ATP = 1,2-di-(9Z-octadecenoyl)-sn-glycero-3-phosphate + ADP + H(+). It carries out the reaction 1-octadecanoyl-2-(9Z,12Z)-octadecadienoyl-sn-glycerol + ATP = 1-octadecanoyl-2-(9Z,12Z-octadecadienoyl)-sn-glycero-3-phosphate + ADP + H(+). It participates in lipid metabolism; glycerolipid metabolism. The activity is calcium-dependent. Requires phosphatidylserine for maximal activity. Diacylglycerol kinase that converts diacylglycerol/DAG into phosphatidic acid/phosphatidate/PA and regulates the respective levels of these two bioactive lipids. Thereby, acts as a central switch between the signaling pathways activated by these second messengers with different cellular targets and opposite effects in numerous biological processes. Has no apparent specificity with regard to the acyl compositions of diacylglycerol. Specifically expressed in the cerebellum where it controls the level of diacylglycerol which in turn regulates the activity of protein kinase C gamma. Through protein kinase C gamma, indirectly regulates the dendritic development of Purkinje cells, cerebellar long term depression and ultimately cerebellar motor coordination. This Homo sapiens (Human) protein is Diacylglycerol kinase gamma (DGKG).